Reading from the N-terminus, the 893-residue chain is Alanine--tRNA ligase (893 aa).

Residues His573, His577, Cys676, and His680 each coordinate Zn(2+). The tract at residues 853 to 872 (LGGGGGGKDDLAQGGGQDPS) is disordered.

It belongs to the class-II aminoacyl-tRNA synthetase family. The cofactor is Zn(2+).

Its subcellular location is the cytoplasm. The catalysed reaction is tRNA(Ala) + L-alanine + ATP = L-alanyl-tRNA(Ala) + AMP + diphosphate. Functionally, catalyzes the attachment of alanine to tRNA(Ala) in a two-step reaction: alanine is first activated by ATP to form Ala-AMP and then transferred to the acceptor end of tRNA(Ala). Also edits incorrectly charged Ser-tRNA(Ala) and Gly-tRNA(Ala) via its editing domain. In Kineococcus radiotolerans (strain ATCC BAA-149 / DSM 14245 / SRS30216), this protein is Alanine--tRNA ligase.